A 505-amino-acid polypeptide reads, in one-letter code: MKGGFSLNSELQLEADAVIIGSGAGGASVADVLTAAGLYVIMLEEGGHVPSSSASPFASEAFAAAWRGGGLTAAIGRPPIAYAEGRCVGGGTEINSAIAQRADSDLLDQWRKLYKIENFTPDELSQYYGRAETTVNASLTPGPLGRPTDILRLGGEALGWKVSELKRGQRDCKGANRCSFICPNGAKQSMAVTLLPKSMDRGMRLLARTRVDKIRIEKGRAAVVVAQLQDAGGQGVHVRVKAGLVFVCAGAIHTPALLRRSGLRKRIGDTLRIHPTIRATALFDEPVDAHQSRLPLTAVTEFMPEQRIGGSVFTPAVFGLSLAEDWTNRGDLMQAWRLCGSYYGMIRPRGVGSVRPLPGINEPLVSFKLAPEDWISLGQVLTLLGQAMFAAGARKVIPSISGHEGWTNPDEVDEFRNKPLPEKATNLMTIHLFSTCPPGEHRDACAVDSYGRVRGVENLFVADGSVIPEAPGVNPQMTIMALAFRIAEAALSHSSRERAQSAARE.

The active-site Proton acceptor is His431.

This sequence belongs to the GMC oxidoreductase family. It depends on FAD as a cofactor.

This is an uncharacterized protein from Sinorhizobium fredii (strain NBRC 101917 / NGR234).